Consider the following 209-residue polypeptide: uncharacterized protein (209 aa).

Positions 13-75 (LSAVDKQMDT…AINLAAVMTD (63 aa)) form a coiled coil. Residues 107–135 (ATPLPSSNTNNEQSMSTYSSSISGKTSET) are disordered. The segment covering 110-119 (LPSSNTNNEQ) has biased composition (polar residues). The segment covering 120–133 (SMSTYSSSISGKTS) has biased composition (low complexity).

The protein belongs to the asfivirus K205R family.

The protein resides in the host cytoplasm. Functionally, induces host endoplasmic reticulum stress and consequently activates autophagy and NF-kappa-B signaling pathway. In turn, may induce autophagy-mediated STING1 degradation and innate immune evasion. This is an uncharacterized protein from Ornithodoros (relapsing fever ticks).